A 397-amino-acid chain; its full sequence is Gastric triacylglycerol lipase (397 aa).

The first 19 residues, 1–19 (MWWLLVTVCFIHMSGNAFC), serve as a signal peptide directing secretion. N-linked (GlcNAc...) asparagine glycosylation is present at asparagine 33. Positions 77 to 376 (PVVFLQHGLL…PNYNHLDFIW (300 aa)) constitute an AB hydrolase-1 domain. Catalysis depends on serine 171, which acts as the Nucleophile. Cysteine 245 and cysteine 254 are disulfide-bonded. N-linked (GlcNAc...) asparagine glycosylation is found at asparagine 270 and asparagine 326. Active-site charge relay system residues include aspartate 342 and histidine 371.

It belongs to the AB hydrolase superfamily. Lipase family.

The protein localises to the secreted. It catalyses the reaction a triacylglycerol + H2O = a diacylglycerol + a fatty acid + H(+). The enzyme catalyses 1,2,3-tri-(9Z-octadecenoyl)-glycerol + H2O = 1,2-di-(9Z-octadecenoyl)-sn-glycerol + (9Z)-octadecenoate + H(+). It carries out the reaction 1,2,3-trioctanoylglycerol + H2O = 1,2-dioctanoyl-sn-glycerol + octanoate + H(+). Its activity is regulated as follows. Inhibited by diethylp-nitrophenyl phosphate but not inhibited by thiol reagents 5,5'-dithiobis(2-nitrobenzoic acid) or 4,4'-dithiopyridine. Its function is as follows. Catalyzes the hydrolysis of triacylglycerols to yield free fatty acids, diacylglycerol, monoacylglycerol, and glycerol. Shows a preferential hydrolysis at the sn-3 position of triacylglycerol. This is Gastric triacylglycerol lipase (LIPF) from Bos taurus (Bovine).